A 281-amino-acid polypeptide reads, in one-letter code: Probable endonuclease 4 (281 aa).

Zn(2+) is bound by residues histidine 69, histidine 109, glutamate 145, aspartate 179, histidine 182, histidine 216, aspartate 229, histidine 231, and glutamate 261.

The protein belongs to the AP endonuclease 2 family. Requires Zn(2+) as cofactor.

The catalysed reaction is Endonucleolytic cleavage to 5'-phosphooligonucleotide end-products.. Endonuclease IV plays a role in DNA repair. It cleaves phosphodiester bonds at apurinic or apyrimidinic (AP) sites, generating a 3'-hydroxyl group and a 5'-terminal sugar phosphate. This chain is Probable endonuclease 4, found in Pectobacterium carotovorum subsp. carotovorum (strain PC1).